Consider the following 508-residue polypeptide: BTB/POZ domain-containing protein At3g03510 (508 aa).

Residues 11-77 form the BTB domain; sequence QDLDLYVKGV…CYGYKIELSA (67 aa). Residues 156-414 enclose the NPH3 domain; sequence TRLLQDLITL…MQVLFVSQMQ (259 aa). Phosphotyrosine is present on Y355.

Belongs to the NPH3 family.

Its pathway is protein modification; protein ubiquitination. In terms of biological role, may act as a substrate-specific adapter of an E3 ubiquitin-protein ligase complex (CUL3-RBX1-BTB) which mediates the ubiquitination and subsequent proteasomal degradation of target proteins. In Arabidopsis thaliana (Mouse-ear cress), this protein is BTB/POZ domain-containing protein At3g03510.